We begin with the raw amino-acid sequence, 142 residues long: Hemoglobin subunit zeta (142 aa).

An N-acetylserine modification is found at S2. Residues 2–142 (SLTKTERTII…VSSVLTEKYR (141 aa)) form the Globin domain. T29 bears the Phosphothreonine mark. The residue at position 53 (S53) is a Phosphoserine. H59 contacts heme b. 2 positions are modified to phosphoserine: S73 and S82. Residue H88 participates in heme b binding.

It belongs to the globin family. Heterotetramer of two zeta chains and two epsilon chains in early embryonic hemoglobin Gower-1; two zeta chains and two gamma chains in fetal hemoglobin Portland-1. Heterotetramer of two zeta chains and two beta chains in hemoglobin Portland-2, detected in fetuses and neonates with homozygous alpha-thalassemia. Detected in fetal erythrocytes (at protein level).

Its function is as follows. The zeta chain is an alpha-type chain of mammalian embryonic hemoglobin. The protein is Hemoglobin subunit zeta (HBZ) of Homo sapiens (Human).